Reading from the N-terminus, the 513-residue chain is ABC transporter H family member 2 (513 aa).

One can recognise an ABC transporter domain in the interval 39–280 (LTMKNIHKTY…EHYQKLYKEC (242 aa)). 75–82 (GTSGGGKT) contributes to the ATP binding site. Residues 291–471 (VTSVFKNDDD…SSSYSNNNNN (181 aa)) form a disordered region. The segment covering 324–360 (SYNNNNSNLNNNSNSNSNNNSNNNNSKNYASSSSSSS) has biased composition (low complexity). Residues 361-386 (VLNGKLSQSTVNNSSIYNHNNDSPFF) show a composition bias toward polar residues. A compositionally biased stretch (low complexity) spans 387–471 (NSNNNNNINN…SSSYSNNNNN (85 aa)).

It belongs to the ABC transporter superfamily.

The protein is ABC transporter H family member 2 (abcH2) of Dictyostelium discoideum (Social amoeba).